Here is a 722-residue protein sequence, read N- to C-terminus: Glycine--tRNA ligase beta subunit (722 aa).

Belongs to the class-II aminoacyl-tRNA synthetase family. Tetramer of two alpha and two beta subunits.

It localises to the cytoplasm. The catalysed reaction is tRNA(Gly) + glycine + ATP = glycyl-tRNA(Gly) + AMP + diphosphate. In Xylella fastidiosa (strain Temecula1 / ATCC 700964), this protein is Glycine--tRNA ligase beta subunit.